Here is a 327-residue protein sequence, read N- to C-terminus: MEKFLKYEIKVNNEQARANPNYGIFEVGPLESGFVITIGNAMRRVLLSCIPGASVFALSISGAKQEFAAVEGMKEDVTEVVLNFKQLVVKISDLLFEDGEMVEPPLERWPLLTVTAEKAGPVYAKDLECPAGFEVVNKDLYLFSLQTDKKVTVNVYVKQGRGFVTFLENREMINSLGIIATDSNFSPVLHCGYEVQELKTSKQKITDHLTFKIATNGAISAVDAFAMAAKILIEHLNPIVNVNESIKALNIIQEKAEERRVRSFAKQIEELDFTVRTFNCLKRSGIHTLQELLSKSLADIREIRNLGKKSEREIIKKVHELGLKLRS.

The interval Met1–Asn243 is alpha N-terminal domain (alpha-NTD). Residues Arg260–Ser327 form an alpha C-terminal domain (alpha-CTD) region.

The protein belongs to the RNA polymerase alpha chain family. As to quaternary structure, homodimer. The RNAP catalytic core consists of 2 alpha, 1 beta, 1 beta' and 1 omega subunit. When a sigma factor is associated with the core the holoenzyme is formed, which can initiate transcription.

The enzyme catalyses RNA(n) + a ribonucleoside 5'-triphosphate = RNA(n+1) + diphosphate. Functionally, DNA-dependent RNA polymerase catalyzes the transcription of DNA into RNA using the four ribonucleoside triphosphates as substrates. The chain is DNA-directed RNA polymerase subunit alpha from Mycoplasma pneumoniae (strain ATCC 29342 / M129 / Subtype 1) (Mycoplasmoides pneumoniae).